The following is a 221-amino-acid chain: MRAGQPKITGAKITGAIIAGGQSSRMQAGGVSGDKFLQPLGSAPVIAHVIARLQPQVDTLFINSKGDLSRFAAFGLPAVKDIAMNHGGPLVGLLTCLAHASPCRLLLTSAADTPFLPCDLASNLIRKQAETGARIILACSNERVHPIVGLWHTDLVPDLEKWLQHAEKASIFWFAKHIGFEVVNIPLAHAPRLAESYDPFFNINLPDDLLKAREINEALQA.

Residues 18–20, Lys35, Asn63, Asp81, and Asp112 each bind GTP; that span reads IAG. Asp112 lines the Mg(2+) pocket.

The protein belongs to the MobA family. In terms of assembly, monomer. Requires Mg(2+) as cofactor.

It localises to the cytoplasm. The enzyme catalyses Mo-molybdopterin + GTP + H(+) = Mo-molybdopterin guanine dinucleotide + diphosphate. Transfers a GMP moiety from GTP to Mo-molybdopterin (Mo-MPT) cofactor (Moco or molybdenum cofactor) to form Mo-molybdopterin guanine dinucleotide (Mo-MGD) cofactor. This chain is Molybdenum cofactor guanylyltransferase, found in Brucella abortus (strain S19).